We begin with the raw amino-acid sequence, 121 residues long: Putative iron-sulfur cluster insertion protein ErpA (121 aa).

C49, C113, and C115 together coordinate iron-sulfur cluster.

This sequence belongs to the HesB/IscA family. In terms of assembly, homodimer. Iron-sulfur cluster serves as cofactor.

Functionally, required for insertion of 4Fe-4S clusters. The protein is Putative iron-sulfur cluster insertion protein ErpA of Nitrosomonas europaea (strain ATCC 19718 / CIP 103999 / KCTC 2705 / NBRC 14298).